A 712-amino-acid chain; its full sequence is Exocyst complex component EXO70I (712 aa).

An N-terminal signal peptide occupies residues 1-18; it reads MHKKQLMALLMVPQTSDS. Residues 26-53 adopt a coiled-coil conformation; it reads LESAYSDLESLLRSSKQMEQNIETMETR. N111 carries an N-linked (GlcNAc...) asparagine glycan.

The protein belongs to the EXO70 family. As to quaternary structure, subunit of the exocyst complex that mediates vesicle tethering during exocytosis. Interacts with VPY at the periarbuscular membrane (PAM) around the arbuscule hyphal tips. As to expression, present at low levels in non-mycorrhizal root tips.

The protein resides in the cell membrane. Its function is as follows. Component of an exocyst subcomplex specifically required for periarbuscular membrane (PAM) biogenesis during arbuscular mycorrhizal (AM) symbiosis with AM fungi (e.g. Glomus versiforme), especially critical during the early branching phase of arbuscule development; probably involved in STR and STR2 delivery into the PAM. The chain is Exocyst complex component EXO70I from Medicago truncatula (Barrel medic).